A 327-amino-acid chain; its full sequence is Type II methyltransferase M.HhaI (327 aa).

An SAM-dependent MTase C5-type domain is found at 12–325; sequence LRFIDLFAGL…YNIGSSLNFK (314 aa). The active site involves cysteine 81.

Belongs to the class I-like SAM-binding methyltransferase superfamily. C5-methyltransferase family. As to quaternary structure, monomer.

The enzyme catalyses a 2'-deoxycytidine in DNA + S-adenosyl-L-methionine = a 5-methyl-2'-deoxycytidine in DNA + S-adenosyl-L-homocysteine + H(+). Functionally, a methylase, recognizes the double-stranded sequence 5'-GCGC-3', methylates C-2 on both strands, and protects the DNA from cleavage by the HhaI endonuclease. The sequence is that of Type II methyltransferase M.HhaI (hhaIM) from Haemophilus parahaemolyticus.